A 243-amino-acid chain; its full sequence is DNA repair protein RecO (243 aa).

It belongs to the RecO family.

Involved in DNA repair and RecF pathway recombination. The sequence is that of DNA repair protein RecO from Xylella fastidiosa (strain M12).